We begin with the raw amino-acid sequence, 405 residues long: Amino sugar nitrososynthase DnmZ (405 aa).

Glu-117 and Arg-332 together coordinate dTDP.

This sequence belongs to the acyl-CoA dehydrogenase family. Homotetramer. FAD serves as cofactor.

The protein operates within antibiotic biosynthesis. In terms of biological role, nitrososynthase involved in the biosynthesis of baumycin. Catalyzes the double-oxidation of TDP-L-epi-vancosamine to TDP-L-epi-vancosonitrose. The rapid turnover of TDP-L-epi-vancosamine suggests that this compound, or a closely related analog, is the natural substrate for DnmZ. Can also catalyze the double-oxidation of TDP-L-evernosamine to TDP-L-evernitrosose. The chain is Amino sugar nitrososynthase DnmZ from Streptomyces peucetius.